Consider the following 250-residue polypeptide: Phosphoribosylaminoimidazole-succinocarboxamide synthase (250 aa).

This sequence belongs to the SAICAR synthetase family.

The enzyme catalyses 5-amino-1-(5-phospho-D-ribosyl)imidazole-4-carboxylate + L-aspartate + ATP = (2S)-2-[5-amino-1-(5-phospho-beta-D-ribosyl)imidazole-4-carboxamido]succinate + ADP + phosphate + 2 H(+). The protein operates within purine metabolism; IMP biosynthesis via de novo pathway; 5-amino-1-(5-phospho-D-ribosyl)imidazole-4-carboxamide from 5-amino-1-(5-phospho-D-ribosyl)imidazole-4-carboxylate: step 1/2. This is Phosphoribosylaminoimidazole-succinocarboxamide synthase from Synechococcus sp. (strain WH7803).